The chain runs to 396 residues: Deoxyuridine 5'-triphosphate nucleotidohydrolase (396 aa).

Substrate is bound by residues 280–282 (RSS) and 380–381 (FG).

Belongs to the dUTPase family. The cofactor is Mg(2+).

It carries out the reaction dUTP + H2O = dUMP + diphosphate + H(+). Functionally, involved in nucleotide metabolism: produces dUMP, the immediate precursor of thymidine nucleotides and decreases the intracellular concentration of dUTP to avoid uracil incorporation into viral DNA. This chain is Deoxyuridine 5'-triphosphate nucleotidohydrolase, found in Varicella-zoster virus (strain Dumas) (HHV-3).